Consider the following 1056-residue polypeptide: Ribosomal protein S6 kinase delta-1 (1056 aa).

In terms of domain architecture, PX spans 8–132 (SADLARFYTV…DFFKGGVISD (125 aa)). A disordered region spans residues 204-223 (VGAVASDSEPSRVEDRESRS). The segment covering 212–222 (EPSRVEDRESR) has biased composition (basic and acidic residues). Residues 276–304 (VQGESSPTRREAVKRRTAEYLMRAESICS) form the MIT domain. Residues Ser281, Ser422, Ser423, Ser426, Ser446, Ser448, and Ser454 each carry the phosphoserine modification. One can recognise a Protein kinase 1 domain in the interval 343 to 444 (GVIDKVLLVM…SMPPRVCLQQ (102 aa)). The disordered stretch occupies residues 426 to 504 (SLDIKEGRPS…KWLDSGSSSE (79 aa)). The span at 443 to 454 (QQPSASPQGGSS) shows a compositional bias: low complexity. The segment covering 473-482 (TSLTPSSQDD) has biased composition (polar residues). Residues Ser493 and Ser527 each carry the phosphoserine modification. A disordered region spans residues 529–588 (SEESVMQPEGDKADTQAVSSPASLATGSVSPSTHLRVFSGGEDLEAVSSPPTSESLSRSK). The segment covering 544–561 (QAVSSPASLATGSVSPST) has biased composition (polar residues). The segment covering 576-587 (SSPPTSESLSRS) has biased composition (low complexity). 8 positions are modified to phosphoserine: Ser577, Ser599, Ser602, Ser634, Ser655, Ser658, Ser661, and Ser787. Residues 628-662 (TLEDGDSPSQSLDPGESKRESEAQDSVSRGSDDSV) form a disordered region. A Protein kinase 2 domain is found at 789-1046 (RSESDRLGQV…VEDIKSHPFF (258 aa)). Residues 795-803 (LGQVEVVVT) and Lys823 contribute to the ATP site. The active-site Proton acceptor is the Asp919.

The protein belongs to the protein kinase superfamily. Ser/Thr protein kinase family. S6 kinase subfamily. In terms of assembly, interacts with SPHK1 and phosphatidylinositol 3-phosphate. Interacts (via PX domain) with PRDX3.

It is found in the cytoplasm. The protein localises to the membrane. The protein resides in the early endosome. It carries out the reaction L-seryl-[protein] + ATP = O-phospho-L-seryl-[protein] + ADP + H(+). It catalyses the reaction L-threonyl-[protein] + ATP = O-phospho-L-threonyl-[protein] + ADP + H(+). May be involved in transmitting sphingosine-1 phosphate (SPP)-mediated signaling into the cell. Plays a role in the recruitment of PRDX3 to early endosomes. This chain is Ribosomal protein S6 kinase delta-1 (Rps6kc1), found in Mus musculus (Mouse).